We begin with the raw amino-acid sequence, 269 residues long: Proenkephalin-A (269 aa).

The first 24 residues, 1–24 (MAQFLRLCIWLLALGSCLLATVQA), serve as a signal peptide directing secretion. Intrachain disulfides connect C26-C48, C30-C52, and C33-C65. Residues 165-191 (DNRAKDSHQQESTNNDEDSTSKRYGGF) are disordered. 2 propeptides span residues 198-209 (SPQLEDEAKELQ) and 219-229 (VGRPEWWMDYQ). Position 253 is a phosphoserine (S253).

The protein belongs to the opioid neuropeptide precursor family. In terms of processing, proenkephalin-A is cleaved by CTSL to generate Met-enkephalin. Processed and degraded by ACE. Post-translationally, probably cleaved by ACE. In terms of processing, processed by ACE to generate Met-enkephalin in the nucleus accumbens of the brain. The N-terminal domain contains 6 conserved cysteines thought to be involved in disulfide bonding and/or processing. As to expression, expressed in brain, heart and testis.

It localises to the secreted. The protein resides in the cytoplasmic vesicle. Its subcellular location is the secretory vesicle. The protein localises to the chromaffin granule lumen. In terms of biological role, neuropeptide that competes with and mimic the effects of opiate drugs. They play a role in a number of physiologic functions, including pain perception and responses to stress. Its function is as follows. Met-enkephalin-Arg-Phe neuropeptide acts as a strong ligand of Mu-type opioid receptor OPRM1. Met-enkephalin-Arg-Phe-binding to OPRM1 in the nucleus accumbens of the brain increases activation of OPRM1, leading to long-term synaptic depression of glutamate release. Increases glutamate release in the striatum and decreases GABA concentration in the striatum. Functionally, increases glutamate release in the striatum. The polypeptide is Proenkephalin-A (Penk) (Rattus norvegicus (Rat)).